Reading from the N-terminus, the 261-residue chain is Hydroxylase cctR (261 aa).

The helical transmembrane segment at 38–58 (VFVSLLILSNTISFGLLGWIG) threads the bilayer. N-linked (GlcNAc...) asparagine glycosylation occurs at asparagine 95. Short sequence motifs (HXXHC) lie at residues 146–150 (HEIHC) and 176–180 (HIAHC).

Belongs to the ustYa family.

The protein resides in the membrane. The protein operates within mycotoxin biosynthesis. In terms of biological role, hydroxylase; part of the gene cluster that mediates the biosynthesis of the mycotoxin cyclochlorotine, a hepatotoxic and carcinogenic cyclic chlorinated pentapeptide. Within the pathway, cctR performs the last step by hydroxylating cyclochlorotine to yield hydroxycyclochlorotine. The NRPS cctN initially catalyzes the condensation of L-serine (Ser), Pro, L-2-aminobutyrate (2Abu), Ser, and beta-Phe in this order to produce isocyclotine. After the dichlorination of Pro2 catalyzed by cctP2 to produce isocyclochlorotine, the cctO-mediated transacylation of isocyclochlorotine can furnish cyclochlorotine. The subsequent hydroxylation of cyclochlorotine by cctR yields hydroxycyclochlorotine as the final product. CctP1 probably acts as a phenylalanine aminomutase and provides the uncommon building block beta-Phe. Furthermore, 2Abu can be synthesized from threonine by one of the threonine dehydratases and transaminases localized outside of the cluster. The functions of the remaining proteins encoded by the cluster, cctM and cctT, have not been identified yet. This chain is Hydroxylase cctR, found in Talaromyces islandicus (Penicillium islandicum).